Reading from the N-terminus, the 505-residue chain is Pentatricopeptide repeat-containing protein At2g17033 (505 aa).

PPR repeat units lie at residues 243–277 (KTQA…KIKP), 278–312 (GLFE…GHKI), and 313–347 (DTVC…NVPF). In terms of domain architecture, Smr spans 413–503 (LDLHGMHLSS…AKGKTVKEWL (91 aa)).

It belongs to the PPR family. P subfamily.

The polypeptide is Pentatricopeptide repeat-containing protein At2g17033 (Arabidopsis thaliana (Mouse-ear cress)).